Consider the following 133-residue polypeptide: ATP synthase epsilon chain, chloroplastic (133 aa).

The protein belongs to the ATPase epsilon chain family. In terms of assembly, F-type ATPases have 2 components, CF(1) - the catalytic core - and CF(0) - the membrane proton channel. CF(1) has five subunits: alpha(3), beta(3), gamma(1), delta(1), epsilon(1). CF(0) has three main subunits: a, b and c.

It is found in the plastid. It localises to the chloroplast thylakoid membrane. In terms of biological role, produces ATP from ADP in the presence of a proton gradient across the membrane. In Solanum lycopersicum (Tomato), this protein is ATP synthase epsilon chain, chloroplastic.